Here is a 318-residue protein sequence, read N- to C-terminus: tRNA-cytidine(32) 2-sulfurtransferase (318 aa).

A PP-loop motif motif is present at residues 65–70; the sequence is SGGKDS. Residues cysteine 140, cysteine 143, and cysteine 231 each coordinate [4Fe-4S] cluster.

It belongs to the TtcA family. Homodimer. Mg(2+) is required as a cofactor. It depends on [4Fe-4S] cluster as a cofactor.

It is found in the cytoplasm. The catalysed reaction is cytidine(32) in tRNA + S-sulfanyl-L-cysteinyl-[cysteine desulfurase] + AH2 + ATP = 2-thiocytidine(32) in tRNA + L-cysteinyl-[cysteine desulfurase] + A + AMP + diphosphate + H(+). It participates in tRNA modification. Catalyzes the ATP-dependent 2-thiolation of cytidine in position 32 of tRNA, to form 2-thiocytidine (s(2)C32). The sulfur atoms are provided by the cysteine/cysteine desulfurase (IscS) system. This is tRNA-cytidine(32) 2-sulfurtransferase from Herminiimonas arsenicoxydans.